We begin with the raw amino-acid sequence, 270 residues long: uncharacterized protein (270 aa).

A divalent metal cation contacts are provided by D53, H55, D83, N116, H207, and H209.

Belongs to the metallophosphoesterase superfamily. It depends on a divalent metal cation as a cofactor.

This is an uncharacterized protein from Bacillus subtilis (strain 168).